A 278-amino-acid polypeptide reads, in one-letter code: uncharacterized protein (278 aa).

Residues 1-11 show a composition bias toward basic and acidic residues; it reads MMIHIHQDKKM. 2 disordered regions span residues 1 to 107 and 206 to 278; these read MMIH…RYFK and KVSA…KASR. Low complexity predominate over residues 62–94; sequence KQSGGKNAKSGSKSAKSGSKSAKSGSKTSKTQS. A compositionally biased stretch (basic and acidic residues) spans 97–107; the sequence is KGDESRDRYFK. The segment covering 249–260 has biased composition (polar residues); it reads SAKNAKSTGNKK. The segment covering 264–278 has biased composition (low complexity); that stretch reads KSAGAKKAPAAKASR.

This is an uncharacterized protein from Acanthamoeba polyphaga mimivirus (APMV).